We begin with the raw amino-acid sequence, 137 residues long: Large ribosomal subunit protein uL16c (137 aa).

Belongs to the universal ribosomal protein uL16 family. In terms of assembly, part of the 50S ribosomal subunit.

It localises to the plastid. The polypeptide is Large ribosomal subunit protein uL16c (Aneura mirabilis (Parasitic liverwort)).